The primary structure comprises 309 residues: Glutaminase (309 aa).

7 residues coordinate substrate: Ser-65, Asn-117, Glu-162, Asn-169, Tyr-193, Tyr-245, and Val-263.

The protein belongs to the glutaminase family. In terms of assembly, homotetramer.

It carries out the reaction L-glutamine + H2O = L-glutamate + NH4(+). In Bacillus mycoides (strain KBAB4) (Bacillus weihenstephanensis), this protein is Glutaminase.